The chain runs to 186 residues: Large ribosomal subunit protein uL22 (186 aa).

The tract at residues 159-186 is disordered; sequence KATDEEPTKKKLSKKKLQRQKEKMMRSE. Over residues 177–186 the composition is skewed to basic and acidic residues; it reads RQKEKMMRSE.

Belongs to the universal ribosomal protein uL22 family.

This chain is Large ribosomal subunit protein uL22 (RpL17), found in Phlebotomus papatasi (Sandfly).